Reading from the N-terminus, the 114-residue chain is Replication initiation control protein YabA (114 aa).

4 residues coordinate Zn(2+): His79, Cys81, Cys95, and Cys98.

It belongs to the YabA family. Homotetramer. Interacts with both DnaA and DnaN, acting as a bridge between these two proteins. Requires Zn(2+) as cofactor.

The protein resides in the cytoplasm. It is found in the nucleoid. Functionally, involved in control of chromosome replication initiation. Inhibits the cooperative binding of DnaA to the oriC region, thus negatively regulating initiation of chromosome replication. Inhibits the ability of DnaA-ATP to form a helix on DNA; does not disassemble preformed DnaA-DNA helices. Decreases the residence time of DnaA on the chromosome at its binding sites (oriC, replication forks and promoter-binding sites). Tethers DnaA to the replication machinery via the DNA polymerase beta sliding clamp subunit (dnaN). Associates with oriC and other DnaA targets on the chromosome in a DnaA-dependent manner. This chain is Replication initiation control protein YabA, found in Lactobacillus gasseri (strain ATCC 33323 / DSM 20243 / BCRC 14619 / CIP 102991 / JCM 1131 / KCTC 3163 / NCIMB 11718 / NCTC 13722 / AM63).